The sequence spans 430 residues: Phosphomethylpyrimidine synthase (430 aa).

Residues Asn-67, Met-96, Tyr-125, His-161, 183 to 185 (SRG), 224 to 227 (DALR), and Glu-263 contribute to the substrate site. His-267 contributes to the Zn(2+) binding site. Substrate is bound at residue Tyr-290. Zn(2+) is bound at residue His-331. Positions 406, 409, and 413 each coordinate [4Fe-4S] cluster.

This sequence belongs to the ThiC family. As to quaternary structure, homodimer. [4Fe-4S] cluster serves as cofactor.

The catalysed reaction is 5-amino-1-(5-phospho-beta-D-ribosyl)imidazole + S-adenosyl-L-methionine = 4-amino-2-methyl-5-(phosphooxymethyl)pyrimidine + CO + 5'-deoxyadenosine + formate + L-methionine + 3 H(+). Its pathway is cofactor biosynthesis; thiamine diphosphate biosynthesis. In terms of biological role, catalyzes the synthesis of the hydroxymethylpyrimidine phosphate (HMP-P) moiety of thiamine from aminoimidazole ribotide (AIR) in a radical S-adenosyl-L-methionine (SAM)-dependent reaction. In Campylobacter jejuni subsp. jejuni serotype O:23/36 (strain 81-176), this protein is Phosphomethylpyrimidine synthase.